The primary structure comprises 168 residues: Photosystem I assembly protein Ycf3 (168 aa).

TPR repeat units follow at residues 35-68 (AFTY…EIDP), 72-105 (SYIL…NPFL), and 120-153 (GEQA…TPGN).

It belongs to the Ycf3 family.

It is found in the plastid. Its subcellular location is the chloroplast thylakoid membrane. Functionally, essential for the assembly of the photosystem I (PSI) complex. May act as a chaperone-like factor to guide the assembly of the PSI subunits. In Buxus microphylla (Littleleaf boxwood), this protein is Photosystem I assembly protein Ycf3.